The sequence spans 350 residues: Protein RecA (350 aa).

80-87 provides a ligand contact to ATP; that stretch reads GPESSGKT.

Belongs to the RecA family.

The protein localises to the cytoplasm. Can catalyze the hydrolysis of ATP in the presence of single-stranded DNA, the ATP-dependent uptake of single-stranded DNA by duplex DNA, and the ATP-dependent hybridization of homologous single-stranded DNAs. It interacts with LexA causing its activation and leading to its autocatalytic cleavage. This is Protein RecA from Chlorobium limicola (strain DSM 245 / NBRC 103803 / 6330).